A 431-amino-acid polypeptide reads, in one-letter code: Glucose-1-phosphate adenylyltransferase (431 aa).

Lys39 is a beta-D-fructose 1,6-bisphosphate binding site. 3 residues coordinate AMP: Arg40, His46, and Arg52. Tyr114 is an alpha-D-glucose 1-phosphate binding site. Position 130 (Arg130) interacts with AMP. Alpha-D-glucose 1-phosphate is bound by residues Gly179, 194–195 (EK), and Ser212. Residues Glu370 and Arg386 each contribute to the AMP site. Beta-D-fructose 1,6-bisphosphate-binding positions include 419–423 (REMLR) and 429–431 (QER).

It belongs to the bacterial/plant glucose-1-phosphate adenylyltransferase family. As to quaternary structure, homotetramer.

It catalyses the reaction alpha-D-glucose 1-phosphate + ATP + H(+) = ADP-alpha-D-glucose + diphosphate. It functions in the pathway glycan biosynthesis; glycogen biosynthesis. Allosterically activated by fructose-1,6-bisphosphate (F16BP) and inhibited by AMP. Functionally, involved in the biosynthesis of ADP-glucose, a building block required for the elongation reactions to produce glycogen. Catalyzes the reaction between ATP and alpha-D-glucose 1-phosphate (G1P) to produce pyrophosphate and ADP-Glc. The sequence is that of Glucose-1-phosphate adenylyltransferase from Escherichia fergusonii (strain ATCC 35469 / DSM 13698 / CCUG 18766 / IAM 14443 / JCM 21226 / LMG 7866 / NBRC 102419 / NCTC 12128 / CDC 0568-73).